A 393-amino-acid chain; its full sequence is Bifunctional enzyme IspD/IspF (393 aa).

The interval 1-234 (MTTSQRTAAI…ARLAASLGDI (234 aa)) is 2-C-methyl-D-erythritol 4-phosphate cytidylyltransferase. Positions 235-393 (RTGTGYDVHA…SATIRLPWGA (159 aa)) are 2-C-methyl-D-erythritol 2,4-cyclodiphosphate synthase. Residues D241 and H243 each contribute to the a divalent metal cation site. Residues 241 to 243 (DVH) and 267 to 268 (HS) each bind 4-CDP-2-C-methyl-D-erythritol 2-phosphate. A divalent metal cation is bound at residue H275. 4-CDP-2-C-methyl-D-erythritol 2-phosphate-binding positions include 289-291 (DIG), 365-368 (TTSE), F372, and R375.

This sequence in the N-terminal section; belongs to the IspD/TarI cytidylyltransferase family. IspD subfamily. In the C-terminal section; belongs to the IspF family. A divalent metal cation is required as a cofactor.

It carries out the reaction 2-C-methyl-D-erythritol 4-phosphate + CTP + H(+) = 4-CDP-2-C-methyl-D-erythritol + diphosphate. It catalyses the reaction 4-CDP-2-C-methyl-D-erythritol 2-phosphate = 2-C-methyl-D-erythritol 2,4-cyclic diphosphate + CMP. The protein operates within isoprenoid biosynthesis; isopentenyl diphosphate biosynthesis via DXP pathway; isopentenyl diphosphate from 1-deoxy-D-xylulose 5-phosphate: step 2/6. It participates in isoprenoid biosynthesis; isopentenyl diphosphate biosynthesis via DXP pathway; isopentenyl diphosphate from 1-deoxy-D-xylulose 5-phosphate: step 4/6. Its function is as follows. Bifunctional enzyme that catalyzes the formation of 4-diphosphocytidyl-2-C-methyl-D-erythritol from CTP and 2-C-methyl-D-erythritol 4-phosphate (MEP) (IspD), and catalyzes the conversion of 4-diphosphocytidyl-2-C-methyl-D-erythritol 2-phosphate (CDP-ME2P) to 2-C-methyl-D-erythritol 2,4-cyclodiphosphate (ME-CPP) with a corresponding release of cytidine 5-monophosphate (CMP) (IspF). This chain is Bifunctional enzyme IspD/IspF, found in Bradyrhizobium sp. (strain ORS 278).